The following is a 221-amino-acid chain: Large ribosomal subunit protein uL3 (221 aa).

Residues 123–156 (GFAGSIKRHNQSRGPESHGSRYHRRPGSMGPIKG) are disordered.

The protein belongs to the universal ribosomal protein uL3 family. As to quaternary structure, part of the 50S ribosomal subunit. Forms a cluster with proteins L14 and L19.

One of the primary rRNA binding proteins, it binds directly near the 3'-end of the 23S rRNA, where it nucleates assembly of the 50S subunit. This chain is Large ribosomal subunit protein uL3, found in Aster yellows witches'-broom phytoplasma (strain AYWB).